The following is a 77-amino-acid chain: Large ribosomal subunit protein uL24 (77 aa).

It belongs to the universal ribosomal protein uL24 family. In terms of assembly, part of the 50S ribosomal subunit.

One of two assembly initiator proteins, it binds directly to the 5'-end of the 23S rRNA, where it nucleates assembly of the 50S subunit. Functionally, one of the proteins that surrounds the polypeptide exit tunnel on the outside of the subunit. The sequence is that of Large ribosomal subunit protein uL24 from Campylobacter jejuni subsp. doylei (strain ATCC BAA-1458 / RM4099 / 269.97).